A 208-amino-acid chain; its full sequence is MTNGPLRVGIGGPVGAGKTTLTEQLCRALAGRLSMAVVTNDIYTREDAEALMRAQVLPADRIRGVETGGCPHTAIREDASINLAAIADLTRAHPDLELILIESGGDNLAATFSPELADLTIYVIDTAAGQDIPRKRGPGVTRSDLLVVNKTDLAPHVGVDPVLLEADTQRARGPRPYVMAQLRHGVGIDEIVAFLIREGGLEQASAPA.

12–19 (GPVGAGKT) contacts GTP.

It belongs to the SIMIBI class G3E GTPase family. UreG subfamily. Homodimer. UreD, UreF and UreG form a complex that acts as a GTP-hydrolysis-dependent molecular chaperone, activating the urease apoprotein by helping to assemble the nickel containing metallocenter of UreC. The UreE protein probably delivers the nickel.

It is found in the cytoplasm. Its function is as follows. Facilitates the functional incorporation of the urease nickel metallocenter. This process requires GTP hydrolysis, probably effectuated by UreG. The polypeptide is Urease accessory protein UreG (Rhodobacter capsulatus (Rhodopseudomonas capsulata)).